Consider the following 204-residue polypeptide: Nicotine blue oxidoreductase (204 aa).

As to quaternary structure, homotetramer. FMN serves as cofactor.

The catalysed reaction is 3,3'-bipyridine-2,2',5,5',6,6'-hexol + NADP(+) = (E)-2,2',5,5'-tetrahydroxy-6H,6'H-(3,3'-bipyridinylidene)-6,6'-dione + NADPH + 3 H(+). It carries out the reaction 3,3'-bipyridine-2,2',5,5',6,6'-hexol + NAD(+) = (E)-2,2',5,5'-tetrahydroxy-6H,6'H-(3,3'-bipyridinylidene)-6,6'-dione + NADH + 3 H(+). It participates in alkaloid degradation; nicotine degradation. Its function is as follows. Catalyzes the reduction of nicotine blue to its hydroquinone form. Nicotine blue is the name given to the compound formed by the autocatalytic condensation of two molecules of 2,3,6-trihydroxypyridine, an intermediate in the nicotine degradation pathway. May play a role in preventing the intracellular formation of nicotine blue semiquinone radicals, which by redox cycling would lead to the formation of toxic reactive oxygen species. Besides nicotine blue, several other quinones are reduced by nboR. The protein is Nicotine blue oxidoreductase (nboR) of Paenarthrobacter nicotinovorans (Arthrobacter nicotinovorans).